A 680-amino-acid polypeptide reads, in one-letter code: DNA-directed RNA polymerase subunit beta' (680 aa).

Zn(2+) contacts are provided by Cys69, Cys71, Cys87, and Cys90. Mg(2+)-binding residues include Asp489, Asp491, and Asp493.

The protein belongs to the RNA polymerase beta' chain family. RpoC1 subfamily. In terms of assembly, in plastids the minimal PEP RNA polymerase catalytic core is composed of four subunits: alpha, beta, beta', and beta''. When a (nuclear-encoded) sigma factor is associated with the core the holoenzyme is formed, which can initiate transcription. Requires Mg(2+) as cofactor. Zn(2+) is required as a cofactor.

It is found in the plastid. Its subcellular location is the chloroplast. The enzyme catalyses RNA(n) + a ribonucleoside 5'-triphosphate = RNA(n+1) + diphosphate. Its function is as follows. DNA-dependent RNA polymerase catalyzes the transcription of DNA into RNA using the four ribonucleoside triphosphates as substrates. This is DNA-directed RNA polymerase subunit beta' from Aethionema cordifolium (Lebanon stonecress).